The chain runs to 116 residues: uncharacterized protein (116 aa).

The segment at 64 to 116 (RRFYSGTVNRNARSAGAASRSTSSVKRPLESKKRNARPETEKWCASYSAGNRR) is disordered. Positions 73–87 (RNARSAGAASRSTSS) are enriched in low complexity. The span at 90-105 (RPLESKKRNARPETEK) shows a compositional bias: basic and acidic residues.

This is an uncharacterized protein from Saccharomyces cerevisiae (strain ATCC 204508 / S288c) (Baker's yeast).